The following is a 442-amino-acid chain: 3-isopropylmalate dehydratase large subunit (442 aa).

Cysteine 347, cysteine 407, and cysteine 410 together coordinate [4Fe-4S] cluster.

Belongs to the aconitase/IPM isomerase family. LeuC type 1 subfamily. In terms of assembly, heterodimer of LeuC and LeuD. [4Fe-4S] cluster is required as a cofactor.

The enzyme catalyses (2R,3S)-3-isopropylmalate = (2S)-2-isopropylmalate. It participates in amino-acid biosynthesis; L-leucine biosynthesis; L-leucine from 3-methyl-2-oxobutanoate: step 2/4. In terms of biological role, catalyzes the isomerization between 2-isopropylmalate and 3-isopropylmalate, via the formation of 2-isopropylmaleate. In Buchnera aphidicola subsp. Uroleucon solidaginis, this protein is 3-isopropylmalate dehydratase large subunit.